We begin with the raw amino-acid sequence, 187 residues long: DNA-directed RNA polymerase subunit Rpo7 (187 aa).

Residues 82–166 enclose the S1 motif domain; the sequence is YELIEGEVVD…RGSKIALTMR (85 aa).

Belongs to the eukaryotic RPB7/RPC8 RNA polymerase subunit family. As to quaternary structure, part of the RNA polymerase complex. Forms a stalk with Rpo4 that extends from the main structure.

It localises to the cytoplasm. It carries out the reaction RNA(n) + a ribonucleoside 5'-triphosphate = RNA(n+1) + diphosphate. DNA-dependent RNA polymerase (RNAP) catalyzes the transcription of DNA into RNA using the four ribonucleoside triphosphates as substrates. The sequence is that of DNA-directed RNA polymerase subunit Rpo7 from Methanocaldococcus jannaschii (strain ATCC 43067 / DSM 2661 / JAL-1 / JCM 10045 / NBRC 100440) (Methanococcus jannaschii).